A 1097-amino-acid polypeptide reads, in one-letter code: Nitric oxide synthase-like protein (1097 aa).

Position 77 (C77) interacts with heme b. Positions 140, 249, 250, 254, and 259 each coordinate L-arginine. (6R)-L-erythro-5,6,7,8-tetrahydrobiopterin contacts are provided by W340 and F353. Y368 is a binding site for heme b. The interval 387-410 (KRPINRKFHFKQIARAVKFTSKLF) is calmodulin-binding. A Flavodoxin-like domain is found at 420–615 (ATVLYATETG…AFRKWASSVF (196 aa)). FMN contacts are provided by residues 426–430 (TETGK) and 561–592 (VFALGSSAYPNFCNFGKYVDKLLVDLGGERIH). One can recognise an FAD-binding FR-type domain in the interval 669 to 914 (KQFVSCTVKA…IRSAPNFHLP (246 aa)). FAD-binding positions include 704-715 (YNPGDHVGIIAC) and 847-857 (LQPRFYSISSS). Residues 922 to 940 (ILIGPGTGIAPFRGFWHHR) and 1019 to 1034 (GAHFYVCGDCKMAEDV) contribute to the NADP(+) site.

This sequence belongs to the NOS family. Requires heme b as cofactor. FAD is required as a cofactor. It depends on FMN as a cofactor.

It catalyses the reaction 2 L-arginine + 3 NADPH + 4 O2 + H(+) = 2 L-citrulline + 2 nitric oxide + 3 NADP(+) + 4 H2O. Its function is as follows. Produces nitric oxide (NO) which is a messenger molecule with diverse functions throughout the body. The chain is Nitric oxide synthase-like protein from Bombyx mori (Silk moth).